The primary structure comprises 399 residues: Methylthioribose kinase (399 aa).

ATP-binding positions include Asn-40, Lys-57, and 111-113 (EDL). Position 229 (Asp-229) interacts with substrate. Residue 246 to 248 (DAE) coordinates ATP. Arg-344 contacts substrate.

It belongs to the methylthioribose kinase family. Homodimer.

The catalysed reaction is 5-(methylsulfanyl)-D-ribose + ATP = 5-(methylsulfanyl)-alpha-D-ribose 1-phosphate + ADP + H(+). It participates in amino-acid biosynthesis; L-methionine biosynthesis via salvage pathway; S-methyl-5-thio-alpha-D-ribose 1-phosphate from S-methyl-5'-thioadenosine (hydrolase route): step 2/2. Its function is as follows. Catalyzes the phosphorylation of methylthioribose into methylthioribose-1-phosphate. The protein is Methylthioribose kinase of Klebsiella pneumoniae subsp. pneumoniae (strain ATCC 700721 / MGH 78578).